The chain runs to 657 residues: 1-deoxy-D-xylulose-5-phosphate synthase (657 aa).

H73 provides a ligand contact to thiamine diphosphate. The tract at residues 91–110 is disordered; it reads RQEGGMSGYPDRGESEHDIV. Basic and acidic residues predominate over residues 101-110; the sequence is DRGESEHDIV. Residue 113 to 115 participates in thiamine diphosphate binding; sequence SHA. D145 lines the Mg(2+) pocket. Thiamine diphosphate contacts are provided by residues 146–147, N175, Y293, and E375; that span reads GA. N175 contacts Mg(2+).

This sequence belongs to the transketolase family. DXPS subfamily. In terms of assembly, homodimer. The cofactor is Mg(2+). Thiamine diphosphate is required as a cofactor.

It catalyses the reaction D-glyceraldehyde 3-phosphate + pyruvate + H(+) = 1-deoxy-D-xylulose 5-phosphate + CO2. It participates in metabolic intermediate biosynthesis; 1-deoxy-D-xylulose 5-phosphate biosynthesis; 1-deoxy-D-xylulose 5-phosphate from D-glyceraldehyde 3-phosphate and pyruvate: step 1/1. Catalyzes the acyloin condensation reaction between C atoms 2 and 3 of pyruvate and glyceraldehyde 3-phosphate to yield 1-deoxy-D-xylulose-5-phosphate (DXP). The protein is 1-deoxy-D-xylulose-5-phosphate synthase of Arthrobacter sp. (strain FB24).